Reading from the N-terminus, the 878-residue chain is MAKSAQGRTKEPTPMMRQYLEVKERYPGYLLLFRVGDFYETFLDDAVTVSSALNIVLTRRSNGGAGEIPLAGFPHHASEGYIAKLVTKGFKVAVCDQVEDPALAKGIVKREITDIVTPGITYSDKILDDRHNNYLCAVAPVKRGREHMAGVAFVDVTTAEFRMTELPLGELKDFLQSLRPSEILISSRDKELRESLAKSLFSGALFTTLDEWMFTEEQAARVLENHFKTHSLKGFGIEGYEAGRIAAGVILQYLEEAKQGSLKYLVRIGLVESGETMTLDIQTCRNLEIISSMQDGSLNGSLLEVIDRTKNPMGARLLRRWLLHPLRKLEPVVRRHDAVGELLDAPEMREGIRGMLGGIIDLERALARIATSRAMPREVRQLGSSLAMIPQLKSLLEGSKSLRLRELALRLDPLPELAETIEKALDAEASGTLRDGGYIRAGYHAELDELRAISSGARDRLLEIQQQERQRTSISTLKVQYNKVFGYYIEVSRANSDKVPEYYEKKQTLVNAERYTIPALKEYEEKILTAEEKSQLLEHQLFQELCAMIAEQAASIQTTAAALAELDCLACFASCADEFGYCRPVMNEGTELSIRAGRHPVLERILGADEPYVANDCQVGSEQQLLIITGPNMAGKSSYLRQVGLVVLLAQVGCFVPAESAEIGLVDRIFTRVGASDNLTSGESTFLVEMNEAASILNNATERSLLLLDEIGRGTSTFDGMSIAWSMCEYIHDQLRSRTLFATHYHELAELESRFERIVNFNATVVETADTVIFLRKIVRGASDNSYGIEVAKMAGMPPEVIERAREILAGMERREVEVPVQRQALPLRVESRQISLFEEEESRLRKALSGIDINRLTPLDALMELKRLQEIALGKGA.

An ATP-binding site is contributed by 630-637 (GPNMAGKS).

This sequence belongs to the DNA mismatch repair MutS family.

In terms of biological role, this protein is involved in the repair of mismatches in DNA. It is possible that it carries out the mismatch recognition step. This protein has a weak ATPase activity. This Chlorobaculum tepidum (strain ATCC 49652 / DSM 12025 / NBRC 103806 / TLS) (Chlorobium tepidum) protein is DNA mismatch repair protein MutS.